The following is a 1370-amino-acid chain: DNA-directed RNA polymerase subunit beta (1370 aa).

Belongs to the RNA polymerase beta chain family. As to quaternary structure, the RNAP catalytic core consists of 2 alpha, 1 beta, 1 beta' and 1 omega subunit. When a sigma factor is associated with the core the holoenzyme is formed, which can initiate transcription.

The enzyme catalyses RNA(n) + a ribonucleoside 5'-triphosphate = RNA(n+1) + diphosphate. DNA-dependent RNA polymerase catalyzes the transcription of DNA into RNA using the four ribonucleoside triphosphates as substrates. The sequence is that of DNA-directed RNA polymerase subunit beta from Albidiferax ferrireducens (strain ATCC BAA-621 / DSM 15236 / T118) (Rhodoferax ferrireducens).